The sequence spans 257 residues: Imidazole glycerol phosphate synthase subunit HisF (257 aa).

Catalysis depends on residues Asp-11 and Asp-130.

The protein belongs to the HisA/HisF family. Heterodimer of HisH and HisF.

The protein resides in the cytoplasm. It carries out the reaction 5-[(5-phospho-1-deoxy-D-ribulos-1-ylimino)methylamino]-1-(5-phospho-beta-D-ribosyl)imidazole-4-carboxamide + L-glutamine = D-erythro-1-(imidazol-4-yl)glycerol 3-phosphate + 5-amino-1-(5-phospho-beta-D-ribosyl)imidazole-4-carboxamide + L-glutamate + H(+). Its pathway is amino-acid biosynthesis; L-histidine biosynthesis; L-histidine from 5-phospho-alpha-D-ribose 1-diphosphate: step 5/9. IGPS catalyzes the conversion of PRFAR and glutamine to IGP, AICAR and glutamate. The HisF subunit catalyzes the cyclization activity that produces IGP and AICAR from PRFAR using the ammonia provided by the HisH subunit. The polypeptide is Imidazole glycerol phosphate synthase subunit HisF (Proteus mirabilis (strain HI4320)).